A 226-amino-acid polypeptide reads, in one-letter code: Cytochrome c biogenesis ATP-binding export protein CcmA (226 aa).

The ABC transporter domain maps to 19–226; it reads LRANDLAFSR…LGGAHALPPA (208 aa). An ATP-binding site is contributed by 51-58; the sequence is GPNGSGKS.

This sequence belongs to the ABC transporter superfamily. CcmA exporter (TC 3.A.1.107) family. The complex is composed of two ATP-binding proteins (CcmA) and two transmembrane proteins (CcmB).

The protein localises to the cell inner membrane. The enzyme catalyses heme b(in) + ATP + H2O = heme b(out) + ADP + phosphate + H(+). Part of the ABC transporter complex CcmAB involved in the biogenesis of c-type cytochromes; once thought to export heme, this seems not to be the case, but its exact role is uncertain. Responsible for energy coupling to the transport system. The protein is Cytochrome c biogenesis ATP-binding export protein CcmA of Cupriavidus pinatubonensis (strain JMP 134 / LMG 1197) (Cupriavidus necator (strain JMP 134)).